Consider the following 442-residue polypeptide: Putative FNIP repeat-containing protein L170 (442 aa).

3 FNIP repeats span residues 213–252 (FNSS…IGRG), 253–294 (FNSE…LGCF), and 295–348 (FNQS…FGMY).

This chain is Putative FNIP repeat-containing protein L170, found in Acanthamoeba polyphaga mimivirus (APMV).